Consider the following 354-residue polypeptide: Uroporphyrinogen decarboxylase (354 aa).

Substrate-binding positions include Arg35–Arg39, Asp84, Tyr159, Ser214, and His333.

Belongs to the uroporphyrinogen decarboxylase family. As to quaternary structure, homodimer.

Its subcellular location is the cytoplasm. The enzyme catalyses uroporphyrinogen III + 4 H(+) = coproporphyrinogen III + 4 CO2. It functions in the pathway porphyrin-containing compound metabolism; protoporphyrin-IX biosynthesis; coproporphyrinogen-III from 5-aminolevulinate: step 4/4. Functionally, catalyzes the decarboxylation of four acetate groups of uroporphyrinogen-III to yield coproporphyrinogen-III. The protein is Uroporphyrinogen decarboxylase of Nocardia farcinica (strain IFM 10152).